The chain runs to 452 residues: Phosphoglucosamine mutase (452 aa).

Ser109 (phosphoserine intermediate) is an active-site residue. Positions 109, 248, 250, and 252 each coordinate Mg(2+). At Ser109 the chain carries Phosphoserine.

This sequence belongs to the phosphohexose mutase family. Mg(2+) serves as cofactor. Activated by phosphorylation.

It carries out the reaction alpha-D-glucosamine 1-phosphate = D-glucosamine 6-phosphate. Its function is as follows. Catalyzes the conversion of glucosamine-6-phosphate to glucosamine-1-phosphate. This is Phosphoglucosamine mutase from Erythrobacter litoralis (strain HTCC2594).